The sequence spans 884 residues: MGMAMRCVLVLFSVSPVLLLFNFEMLEVALHLASREKELDTAAVTPSASLSFLSRFRIMLGMNHHRSRGRRHKRCSEAPAPAPAPALVPAHQARSEAPAPLVHVPRKGMPSTHRSHIAPARSPVHKVKDGGHTKIPRSAIVALGVVGLCLVVLGVVIAAFSVRRSRKFKKVCTKAFKPFHHGSRDQRSPAATRKVSSHPSPDPLTLSSIVQYQQNLPNLKQSSESKSLSIQSTIPMGTELIVSDHAVINNSQSDEVESFHSIPCSDLSAGSITELPQQICDRRAIMNRSEYFLQTHDSPSDSSYQSLSPDCTSRLSPKDQTFTASSHLSLRSKTCPEKSDGENAEINCHDGLEITCISGSMEHKEAPIEERARINFRNPPSQHIFPPSYRTDTSQSKINIAFTMTNSEVESSSKESSRIETSSSMGIPKPAPPPPPQKNPPPNLKGQCYGQPPPPPPLPLQIQVGKDGSPLPRLKPLHWDKVRAAPNRSMVWNDIRSSSFEFEFDEQMIKSLFAYNLQGSMKDEEAMNKTASTTKHVIEHHRLQNTTILLKTLNANTSQVCNSVIQGNGLSVQQLEALVKMKPTKEEEEKLLNYDGDINMLDPAENFVKVLLTIPMAFPRMEVMLYKENFDDEVAHIKMSFAMIEGACTELKSSKLFLRLLEAVLKTGNRMNVGTLRGGASAFKLDALLKLADIRGTDGKTTLLHFVVKEMARSKGLKALEKLNETPSSCHDTPTEREEYSSMGTEFVSELSNELGNVKKVASIDLDTLRNSISNLSCGLAQLRNLVEKDLASDDKNNNFLQCMKSFLNHAENTMQGLKADEAQVLLNVRELTEYYHGEVSKDESNLLQIFIIVKDFLGLLDKVCREMRGTKHNQTLNLVLPLK.

Positions 1–19 (MGMAMRCVLVLFSVSPVLL) are cleaved as a signal peptide. Residues 140 to 160 (IVALGVVGLCLVVLGVVIAAF) form a helical membrane-spanning segment. 3 disordered regions span residues 179–204 (FHHG…PDPL), 295–318 (THDS…LSPK), and 403–473 (TMTN…PLPR). Over residues 300–310 (SDSSYQSLSPD) the composition is skewed to low complexity. Over residues 429-443 (KPAPPPPPQKNPPPN) the composition is skewed to pro residues. Residues 464-884 (VGKDGSPLPR…QTLNLVLPLK (421 aa)) form the FH2 domain.

Belongs to the formin-like family. Class-I subfamily.

The protein resides in the membrane. The polypeptide is Formin-like protein 9 (FH9) (Oryza sativa subsp. indica (Rice)).